A 466-amino-acid polypeptide reads, in one-letter code: Heat stress transcription factor A-5 (466 aa).

A DNA-binding region spans residues 21-115 (PAPFLVKTYE…LLKNIHRRKP (95 aa)). Residues 125 to 191 (SSTDQERAVL…KLLNFLETAI (67 aa)) form a hydrophobic repeat HR-A/B region. The short motif at 198 to 217 (KNFGKKVEQLDISAYNKKRR) is the Bipartite nuclear localization signal element. Disordered stretches follow at residues 215-248 (KRRL…GNIF), 272-300 (HSIQ…LTKR), and 422-466 (TERP…QLTL). A compositionally biased stretch (basic and acidic residues) spans 218 to 233 (LPEVEQSKPPSEDSHL). The AHA signature appears at 414 to 423 (DVFWEQFLTE). 2 stretches are compositionally biased toward polar residues: residues 425–438 (PGSS…STYR) and 455–466 (LRNTKNIEQLTL). The Nuclear export signal signature appears at 461 to 466 (IEQLTL).

Belongs to the HSF family. Class A subfamily. In terms of assembly, homotrimer. Exhibits temperature-dependent phosphorylation.

It is found in the cytoplasm. Its subcellular location is the nucleus. Functionally, transcriptional activator that specifically binds DNA sequence 5'-AGAAnnTTCT-3' known as heat shock promoter elements (HSE). The chain is Heat stress transcription factor A-5 (HSFA5) from Arabidopsis thaliana (Mouse-ear cress).